Reading from the N-terminus, the 606-residue chain is MEERGRRKPLYEMTRELAATARGDLPATLVIRDGTLVSVTSGEVLPGMSVAVRGPRIAYVGPDAGHTVGPQTTVIDAAGRYIAPGFLDGHCHIESSQITVTQFARAVLPLGTTGGFFDAHEITNVLGLRGLRLMLDEARSTPLAAYLEVASCVPSTSTELETPGAVIGPEEVAEALSWGEDVIALGEVMNFPGVVFGDERMHAEISAALRAGKIADGHFCWPPDDHRLAAYAASGISGCHEGTTPEDTLWRLRQGMYAKLRRGSAWHDVAATIKAHTERGLDPRRILLVTDDRSPESLLEEGHMDFVVRHAIAQGVNPVTAFQMATLNPAERFRVSHDVGSVTPGRYADILLLEGDLAEVRVSLTVAAGEVVAEGGRMVAELEPYDYPAFCLDTVRVAGGLGPEDFDIPAPGGGERARVRAIRVVENHVETRGEWVELPVEGGLVRLDPRKDVCKLFVIERHGRGGGRGAGFVTGLGFERPAALASTVAHDSHNLMVLGNSEELMSRAAREVVAARGGVAVAVGGETAVLPLPVAGLMSPEPYEEVARLSREIGRALRSAGCRMNYAFMTISLLALVVLPELHLSDRGLVEVGEEGFRLVGLAAEG.

The protein belongs to the metallo-dependent hydrolases superfamily. Adenine deaminase family. Requires Mn(2+) as cofactor.

It carries out the reaction adenine + H2O + H(+) = hypoxanthine + NH4(+). This chain is Adenine deaminase, found in Rubrobacter xylanophilus (strain DSM 9941 / JCM 11954 / NBRC 16129 / PRD-1).